The sequence spans 293 residues: Homoserine kinase (293 aa).

ATP is bound at residue 83-93; it reads RPKSGLGSSGA.

This sequence belongs to the GHMP kinase family. Homoserine kinase subfamily.

Its subcellular location is the cytoplasm. The enzyme catalyses L-homoserine + ATP = O-phospho-L-homoserine + ADP + H(+). The protein operates within amino-acid biosynthesis; L-threonine biosynthesis; L-threonine from L-aspartate: step 4/5. In terms of biological role, catalyzes the ATP-dependent phosphorylation of L-homoserine to L-homoserine phosphate. This Pyrococcus horikoshii (strain ATCC 700860 / DSM 12428 / JCM 9974 / NBRC 100139 / OT-3) protein is Homoserine kinase.